Consider the following 982-residue polypeptide: Probable beta-galactosidase C (982 aa).

Positions M1–A21 are cleaved as a signal peptide. Substrate contacts are provided by Y80, N125, A126, E127, and N185. E186 acts as the Proton donor in catalysis. Y249 provides a ligand contact to substrate. C255 and C302 are disulfide-bonded. N274 is a glycosylation site (N-linked (GlcNAc...) asparagine). Residue E285 is the Nucleophile of the active site. Y351 lines the substrate pocket. N-linked (GlcNAc...) asparagine glycosylation is found at N389, N434, N600, N675, N718, and N785.

This sequence belongs to the glycosyl hydrolase 35 family.

Its subcellular location is the secreted. It carries out the reaction Hydrolysis of terminal non-reducing beta-D-galactose residues in beta-D-galactosides.. In terms of biological role, cleaves beta-linked terminal galactosyl residues from gangliosides, glycoproteins, and glycosaminoglycans. The chain is Probable beta-galactosidase C (lacC) from Penicillium rubens (strain ATCC 28089 / DSM 1075 / NRRL 1951 / Wisconsin 54-1255) (Penicillium chrysogenum).